Consider the following 860-residue polypeptide: Protein translocase subunit SecA (860 aa).

Residues Gln-87, 105–109, and Asp-514 contribute to the ATP site; that span reads GEGKT. Zn(2+) contacts are provided by Cys-846, Cys-848, Cys-857, and Cys-858.

The protein belongs to the SecA family. As to quaternary structure, monomer and homodimer. Part of the essential Sec protein translocation apparatus which comprises SecA, SecYEG and auxiliary proteins SecDF. Other proteins may also be involved. Zn(2+) serves as cofactor.

The protein resides in the cell membrane. It localises to the cytoplasm. The catalysed reaction is ATP + H2O + cellular proteinSide 1 = ADP + phosphate + cellular proteinSide 2.. In terms of biological role, part of the Sec protein translocase complex. Interacts with the SecYEG preprotein conducting channel. Has a central role in coupling the hydrolysis of ATP to the transfer of proteins into and across the cell membrane, serving as an ATP-driven molecular motor driving the stepwise translocation of polypeptide chains across the membrane. In Endomicrobium trichonymphae, this protein is Protein translocase subunit SecA.